Reading from the N-terminus, the 357-residue chain is Tetraacyldisaccharide 4'-kinase (357 aa).

49–56 (TIGGTGKT) contacts ATP.

Belongs to the LpxK family.

The catalysed reaction is a lipid A disaccharide + ATP = a lipid IVA + ADP + H(+). The protein operates within glycolipid biosynthesis; lipid IV(A) biosynthesis; lipid IV(A) from (3R)-3-hydroxytetradecanoyl-[acyl-carrier-protein] and UDP-N-acetyl-alpha-D-glucosamine: step 6/6. Transfers the gamma-phosphate of ATP to the 4'-position of a tetraacyldisaccharide 1-phosphate intermediate (termed DS-1-P) to form tetraacyldisaccharide 1,4'-bis-phosphate (lipid IVA). The chain is Tetraacyldisaccharide 4'-kinase from Porphyromonas gingivalis (strain ATCC BAA-308 / W83).